The sequence spans 629 residues: Sushi domain-containing protein 5 (629 aa).

The signal sequence occupies residues Met1 to Arg35. Residues Ala36–Pro574 are Extracellular-facing. The Link domain maps to Lys39–Lys134. 3 cysteine pairs are disulfide-bonded: Cys61-Cys132, Cys140-Cys184, and Cys167-Cys197. In terms of domain architecture, Sushi spans Lys138–Lys199. A compositionally biased stretch (basic and acidic residues) spans Glu225–Arg249. 2 disordered regions span residues Glu225 to Ser252 and Asp344 to Glu403. Residues Val575–Val595 traverse the membrane as a helical segment. At Trp596–Val629 the chain is on the cytoplasmic side.

The protein resides in the membrane. In Homo sapiens (Human), this protein is Sushi domain-containing protein 5 (SUSD5).